Reading from the N-terminus, the 658-residue chain is MSRTIGSRVIFLILALFCCTENSRGKLVMQGSAGFFKGYRTLTSTKKHAYGQAFEDEIVPFKNSANDTVTSFSVTFFFAIAPEDKHKGAHGMAFVISPTRGITGASADQYLGIFNKANNGDSSNHVIAVELDINKDEEFGDINDNHVGININGMRSIKFAPAGYYDQEGQFKDLSLISGSLLRVTILYSQMEKQLNVTLSSPEEAYYPNKPLLSLNQDLSPYILENMYVGFSASTGSVRAMHYMLSWFVHGGVDVPNLDLGIPTFPPYPKEKSLVYRIVLVTSLALVLFVALVASALSIFFYRRHKKVKEVLEEWEIQCGPHRFAYKELFKATKGFKQLLGKGGFGQVFKGTLPGSDAEIAVKRISHDSKQGMQEFLAEISTIGRLRHQNLVRLQGYCRYKEELYLVYDFMPNGSLDKYLYHRANQEQLTWNQRFKIIKDIASALCYLHHEWVQVVIHRDIKPANVLIDHQMNARLGDFGLAKLYDQGYDPQTSRVAGTFWYIAPELIRSGRATTGTDVYAFGLFMLEVSCGRRLIERRTASDEVVLAEWTLKCWENGDILEAVNDGIRHEDNREQLELVLKLGVLCSHQAVAIRPDMSKVVQILGGDLQLPDNLLDIVKAEKVRMWSETSESVLGVLTSQGSIGTLTLTEPFTSRGR.

The first 25 residues, 1–25 (MSRTIGSRVIFLILALFCCTENSRG), serve as a signal peptide directing secretion. Residues 26 to 248 (KLVMQGSAGF…RAMHYMLSWF (223 aa)) are legume-lectin like. Residues 26–280 (KLVMQGSAGF…EKSLVYRIVL (255 aa)) are Extracellular-facing. N-linked (GlcNAc...) asparagine glycans are attached at residues asparagine 66 and asparagine 196. The helical transmembrane segment at 281 to 301 (VTSLALVLFVALVASALSIFF) threads the bilayer. Over 302–658 (YRRHKKVKEV…LTEPFTSRGR (357 aa)) the chain is Cytoplasmic. In terms of domain architecture, Protein kinase spans 334 to 592 (KGFKQLLGKG…LGVLCSHQAV (259 aa)). Residues 340-348 (LGKGGFGQV) and lysine 363 each bind ATP. Aspartate 460 functions as the Proton acceptor in the catalytic mechanism.

In the C-terminal section; belongs to the protein kinase superfamily. Ser/Thr protein kinase family. This sequence in the N-terminal section; belongs to the leguminous lectin family.

Its subcellular location is the cell membrane. It catalyses the reaction L-seryl-[protein] + ATP = O-phospho-L-seryl-[protein] + ADP + H(+). The enzyme catalyses L-threonyl-[protein] + ATP = O-phospho-L-threonyl-[protein] + ADP + H(+). Functionally, involved in resistance response to the pathogenic oomycetes Phytophthora infestans and Phytophthora capsici and to the pathogenic bacteria Pseudomonas syringae. The sequence is that of L-type lectin-domain containing receptor kinase V.4 from Arabidopsis thaliana (Mouse-ear cress).